The chain runs to 764 residues: MNGEADCPTDLEMAAPKGQDRWSQEDMLTLLECMKNNLPSNDSSKFKTTESHMDWEKVAFKDFSGDMCKLKWVEISNEVRKFRTLTELILDAQEHVKNPYKGKKLKKHPDFPKKPLTPYFRFFMEKRAKYAKLHPEMSNLDLTKILSKKYKELPEKKKMKYIQDFQREKQEFERNLARFREDHPDLIQNAKKSDIPEKPKTPQQLWYTHEKKVYLKVRPDATTKEVKDSLGKQWSQLSDKKRLKWIHKALEQRKEYEEIMRDYIQKHPELNISEEGITKSTLTKAERQLKDKFDGRPTKPPPNSYSLYCAELMANMKDVPSTERMVLCSQQWKLLSQKEKDAYHKKCDQKKKDYEVELLRFLESLPEEEQQRVLGEEKMLNINKKQTTSPASKKPSQEGGKGGSEKPKRPVSAMFIFSEEKRRQLQEERPELSESELTRLLARMWNDLSEKKKAKYKAREAALKAQSERKPGGEREDRGKLPESPKRAEEIWQQSVIGDYLARFKNDRVKALKAMEMTWNNMEKKEKLMWIKKAAEDQKRYERELSEMRAPPAATNSSKKMKFQGEPKKPPMNGYQKFSQELLSNGELNHLPLKERMVEIGSRWQRISQSQKEHYKKLAEEQQRQYKVHLDLWVKSLSPQDRAAYKEYISNKRKNMTKLRGPNPKSSRTTLQSKSESEEDDDEEDDDDDDEEEEEDDENGDSSEDGGDSSESSSEDESEDGDENEDDDDDEDDDEDDDEDEDNESEGSSSSSSSSGDSSDSDSN.

An N-acetylmethionine modification is found at M1. The segment at 1-21 is disordered; the sequence is MNGEADCPTDLEMAAPKGQDR. DNA-binding regions (HMG box) lie at residues 112–180 and 196–264; these read PKKP…ARFR and PEKP…RDYI. A Phosphothreonine modification is found at T201. Phosphoserine is present on residues S273, S336, and S364. A DNA-binding region (HMG box 3) is located at residues 298–362; sequence TKPPPNSYSL…DYEVELLRFL (65 aa). The span at 370–379 shows a compositional bias: basic and acidic residues; that stretch reads QQRVLGEEKM. The segment at 370–411 is disordered; the sequence is QQRVLGEEKMLNINKKQTTSPASKKPSQEGGKGGSEKPKRPV. Phosphoserine is present on residues S389, S412, S433, S435, S484, S495, S546, S584, and S638. 3 consecutive DNA-binding regions (HMG box) follow at residues 407-475, 482-549, and 568-634; these read PKRP…GGER, PESP…SEMR, and KKPP…DLWV. The disordered stretch occupies residues 456–488; that stretch reads YKAREAALKAQSERKPGGEREDRGKLPESPKRA. The segment covering 457-488 has biased composition (basic and acidic residues); the sequence is KAREAALKAQSERKPGGEREDRGKLPESPKRA. The tract at residues 546–576 is disordered; it reads SEMRAPPAATNSSKKMKFQGEPKKPPMNGYQ. Residues 648–764 are disordered; the sequence is YISNKRKNMT…SGDSSDSDSN (117 aa). Residues 664 to 674 are compositionally biased toward polar residues; sequence PKSSRTTLQSK. The segment covering 677 to 745 has biased composition (acidic residues); that stretch reads SEEDDDEEDD…DDDEDEDNES (69 aa). A compositionally biased stretch (low complexity) spans 746–758; the sequence is EGSSSSSSSSGDS.

In terms of assembly, homodimer. Part of Pol I pre-initiation complex (PIC), in which Pol I core assembles with RRN3 and promoter-bound UTBF and SL1/TIF-IB complex. Interacts with TOP2A in the context of Pol I complex. Interacts with TBP. Interacts with TAF1A. Interacts with PHF6. Interacts with CEBPA (isoform 1 and isoform 4). Interacts with DDX11. Interacts with NOP53. Interacts with RASL11A. Interacts with DHX33. Binds to IRS1 and PIK3CA. Interacts with ALKBH2. Post-translationally, phosphorylated and activated by PIK3CA.

It is found in the nucleus. The protein resides in the nucleolus. In terms of biological role, recognizes the ribosomal RNA gene promoter and activates transcription mediated by RNA polymerase I through cooperative interactions with the transcription factor SL1/TIF-IB complex. It binds specifically to the upstream control element. The polypeptide is Nucleolar transcription factor 1 (Ubtf) (Rattus norvegicus (Rat)).